The following is a 175-amino-acid chain: Bcl-2-related protein A1 (175 aa).

A BH1 motif is present at residues 77 to 97 (KEFEDGIINWGRIVTIFAFEG). The short motif at 132-147 (EWIRQNGGWENGFVKK) is the BH2 element.

It belongs to the Bcl-2 family. Interacts directly with BAK1, BID, BMF and BBC3. Interacts directly with BCL2L11/BIM. Interacts with BAX isoform Sigma. Interacts directly with PMAIP1. Interacts with RTL10/BOP. Interacts with ING4. Interacts with UBQLN4. As to expression, seems to be restricted to the hematopoietic compartment. Expressed in peripheral blood, spleen, and bone marrow, at moderate levels in lung, small intestine and testis, at a minimal levels in other tissues. Also found in vascular smooth muscle cells and hematopoietic malignancies.

It localises to the cytoplasm. Retards apoptosis induced by IL-3 deprivation. May function in the response of hemopoietic cells to external signals and in maintaining endothelial survival during infection. Can inhibit apoptosis induced by serum starvation in the mammary epithelial cell line HC11. This chain is Bcl-2-related protein A1 (BCL2A1), found in Homo sapiens (Human).